A 747-amino-acid polypeptide reads, in one-letter code: Sulfhydryl oxidase 1 (747 aa).

The N-terminal stretch at 1–29 (MRRCNSGSGPPPSLLLLLLWLLAVPGANA) is a signal peptide. One can recognise a Thioredoxin domain in the interval 36-156 (YSPSDPLTLL…RERLIDALES (121 aa)). Catalysis depends on nucleophile residues Cys-70 and Cys-73. Cystine bridges form between Cys-70–Cys-73 and Cys-101–Cys-110. Asn-130 is a glycosylation site (N-linked (GlcNAc...) (complex) asparagine). Asn-243 carries N-linked (GlcNAc...) asparagine glycosylation. Cys-393 and Cys-405 are joined by a disulfide. One can recognise an ERV/ALR sulfhydryl oxidase domain in the interval 396–503 (SEPHFRGFPC…EDPQFPKVQW (108 aa)). Residues Arg-401, Trp-408, and His-412 each contribute to the FAD site. A Phosphoserine; by FAM20C modification is found at Ser-426. Cys-449 and Cys-452 are oxidised to a cystine. FAD-binding positions include Asp-451, His-455, 478–485 (WSSHNRVN), Lys-500, and Trp-503. A disulfide bond links Cys-509 and Cys-512. Positions 573–633 (SRNSTLDPGK…HMAELQRNEQ (61 aa)) are disordered. A glycan (N-linked (GlcNAc...) asparagine) is linked at Asn-575. Positions 621–633 (PPEHMAELQRNEQ) are enriched in basic and acidic residues. The helical transmembrane segment at 710–730 (ISLCVGLYSLSFMGLLAMYTY) threads the bilayer.

The protein belongs to the quiescin-sulfhydryl oxidase (QSOX) family. As to quaternary structure, monomer. It depends on FAD as a cofactor. N-glycosylated. O-glycosylated on Thr and Ser residues. As to expression, expressed in heart, placenta, lung, liver, skeletal muscle, pancreas and very weakly in brain and kidney.

It is found in the golgi apparatus membrane. The protein localises to the secreted. The enzyme catalyses 2 R'C(R)SH + O2 = R'C(R)S-S(R)CR' + H2O2. Its function is as follows. Catalyzes the oxidation of sulfhydryl groups in peptide and protein thiols to disulfides with the reduction of oxygen to hydrogen peroxide. Plays a role in disulfide bond formation in a variety of extracellular proteins. In fibroblasts, required for normal incorporation of laminin into the extracellular matrix, and thereby for normal cell-cell adhesion and cell migration. The sequence is that of Sulfhydryl oxidase 1 (QSOX1) from Homo sapiens (Human).